The sequence spans 655 residues: Methylenetetrahydrofolate reductase (NADPH) (655 aa).

Positions 1–39 are disordered; sequence MVNEPRGNGSPGPRWEGSSSGSESSRTSSRCSTPGLDPE. 9 positions are modified to phosphoserine: S10, S18, S19, S20, S22, S24, S25, S28, and S29. A compositionally biased stretch (low complexity) spans 11-35; the sequence is PGPRWEGSSSGSESSRTSSRCSTPG. T33 bears the Phosphothreonine mark. E62 (proton donor/acceptor) is an active-site residue. NAD(+) contacts are provided by residues 62-67 and 93-94; these read EFFPPR and TW. T93 is subject to Phosphothreonine. 93–94 contributes to the FAD binding site; the sequence is TW. At S102 the chain carries Phosphoserine. Residues H126, 156 to 158, 173 to 174, Y196, 200 to 203, D209, and K216 contribute to the FAD site; these read RGD, YA, and HPEG. Residue D158 coordinates substrate. Residues Q227, Y320, and R324 each coordinate substrate. S393 bears the Phosphoserine mark. T450 carries the post-translational modification Phosphothreonine. Residues N455, 460 to 463, 480 to 484, T559, and T572 each bind S-adenosyl-L-methionine; these read AAET and TINSQ.

This sequence belongs to the methylenetetrahydrofolate reductase family. As to quaternary structure, homodimer. Requires FAD as cofactor. Post-translationally, phosphorylation of an N-terminal serine-rich phosphorylation region increases sensitivity to S-adenosylmethionine and inhibition.

It carries out the reaction (6S)-5-methyl-5,6,7,8-tetrahydrofolate + NADP(+) = (6R)-5,10-methylene-5,6,7,8-tetrahydrofolate + NADPH + H(+). It functions in the pathway one-carbon metabolism; tetrahydrofolate interconversion. With respect to regulation, allosterically regulated by S-adenosylmethionine (SAM). Its function is as follows. Catalyzes the conversion of 5,10-methylenetetrahydrofolate to 5-methyltetrahydrofolate, a cosubstrate for homocysteine remethylation to methionine. Represents a key regulatory connection between the folate and methionine cycles. The protein is Methylenetetrahydrofolate reductase (NADPH) (MTHFR) of Bos taurus (Bovine).